Here is a 718-residue protein sequence, read N- to C-terminus: Origin of replication complex subunit 3 (718 aa).

The segment covering 26-43 (GAAASSSSSSAPSLPSSG) has biased composition (low complexity). Residues 26–75 (GAAASSSSSSAPSLPSSGRARRRIDVSGLASPNPKPGKRSRDDDAAEDDD) are disordered. A Nuclear localization signal motif is present at residues 659–666 (IKRKPHTS).

Belongs to the ORC3 family. As to quaternary structure, component of the origin recognition complex (ORC) composed of at least ORC1, ORC2, ORC3, ORC4, ORC5 and ORC6. ORC is regulated in a cell-cycle and development dependent manner. It is sequentially assembled at the exit from anaphase of mitosis and disassembled as cells enter S phase. In terms of tissue distribution, expressed at low levels in the shoot apical meristem (SAM), leaves, ears and roots (including root tips).

It is found in the nucleus. Functionally, component of the origin recognition complex (ORC) that binds origins of replication. DNA-binding is ATP-dependent. The specific DNA sequences that define origins of replication have not been identified yet. The protein is Origin of replication complex subunit 3 of Oryza sativa subsp. japonica (Rice).